Here is a 947-residue protein sequence, read N- to C-terminus: Bromodomain testis-specific protein (947 aa).

Positions 27 to 133 (RLTNQLQYLQ…KLFVQKLSQM (107 aa)) constitute a Bromo 1 domain. Ser-187 carries the phosphoserine modification. The Nuclear localization signal motif lies at 209-220 (KGVKRKADTTTP). The Bromo 2 domain occupies 267 to 376 (VKVTEQLRHC…DVFETHFSKI (110 aa)). Disordered stretches follow at residues 395–421 (ETTGRENTNEASSEGNSSGDSEDERVQ), 444–512 (PFRK…PMNY), 610–690 (NNQL…VKKM), and 849–873 (HLEQNTKEPKVSQENQRDLGNGLTV). Residues 403–413 (NEASSEGNSSG) show a composition bias toward low complexity. A coiled-coil region spans residues 417 to 470 (DERVQRLAKLQEQLKAVHQQLQVLSQVPFRKLNKKKEKSKKEKKKEKVNNSNEN). Residues 447 to 462 (KLNKKKEKSKKEKKKE) are compositionally biased toward basic residues. Over residues 470 to 481 (NPRKMCEQMRLK) the composition is skewed to basic and acidic residues. Residues 482-494 (EKSKRNQPKKRKQ) show a composition bias toward basic residues. Residues 500–582 (KSEDEDNAKP…ACLRKRPLKP (83 aa)) form the NET domain. A compositionally biased stretch (low complexity) spans 631–668 (VGSVSRLSESSSSSSSSSESESSSSDLSSSDSSGSESE). Composition is skewed to basic and acidic residues over residues 674–690 (TEVKPNDSPSKENVKKM) and 849–865 (HLEQNTKEPKVSQENQR).

This sequence belongs to the BET family. In terms of assembly, interacts with SMARCE1. Interacts with mRNA splicing machinery proteins SRSF2, DDX5, HNRNPK and TARDBP. Interacts with the acetylated N-terminus of histone H1, H2, H3 and H4. Interacts with P-TEFb components CDK9 and CCNT1/cyclin-T1. In terms of processing, ubiquitinated in a SPOP-dependent manner, leading to proteasomal degradation.

The protein localises to the nucleus. Functionally, testis-specific chromatin protein that specifically binds histone H4 acetylated at 'Lys-5' and 'Lys-8' (H4K5ac and H4K8ac, respectively) and plays a key role in spermatogenesis. Required in late pachytene spermatocytes: plays a role in meiotic and post-meiotic cells by binding to acetylated histones at the promoter of specific meiotic and post-meiotic genes, facilitating their activation at the appropriate time. In the post-meiotic phase of spermatogenesis, binds to hyperacetylated histones and participates in their general removal from DNA. Also recognizes and binds a subset of butyrylated histones: able to bind histone H4 butyrylated at 'Lys-8' (H4K8ac), while it is not able to bind H4 butyrylated at 'Lys-5' (H4K5ac). Also acts as a component of the splicing machinery in pachytene spermatocytes and round spermatids and participates in 3'-UTR truncation of specific mRNAs in post-meiotic spermatids. Required for chromocenter organization, a structure comprised of peri-centromeric heterochromatin. The sequence is that of Bromodomain testis-specific protein (BRDT) from Macaca fascicularis (Crab-eating macaque).